Reading from the N-terminus, the 262-residue chain is Nitrate transport protein NasD (262 aa).

Residues 5-239 enclose the ABC transporter domain; sequence IQVQGVSQRF…RPRNRVQLAD (235 aa). An ATP-binding site is contributed by 41–48; the sequence is GHSGCGKS.

Belongs to the ABC transporter superfamily.

The protein localises to the cell membrane. In terms of biological role, probably part of a high-affinity binding-protein-dependent transport system for nitrate. Probably responsible for energy coupling to the transport system. This is Nitrate transport protein NasD (nasD) from Klebsiella oxytoca.